Reading from the N-terminus, the 1241-residue chain is Putative ABC transporter B family member 8 (1241 aa).

The chain crosses the membrane as a helical span at residues 24-44 (FADWIDIVLMVLGSVGAIGDG). Positions 33–323 (MVLGSVGAIG…ALTEIRYFSE (291 aa)) constitute an ABC transmembrane type-1 1 domain. Asn-48 carries N-linked (GlcNAc...) asparagine glycosylation. 5 helical membrane-spanning segments follow: residues 82-102 (LYFV…GYCW), 157-177 (VPIF…SAYF), 183-203 (VVAI…GKYL), 263-283 (GLAV…AWYG), and 297-317 (IYAA…ALTE). The 237-residue stretch at 360–596 (VEFERVTLVY…NNHYAKLVKL (237 aa)) folds into the ABC transporter 1 domain. 395-402 (GASGSGKS) contributes to the ATP binding site. Asn-571, Asn-632, and Asn-648 each carry an N-linked (GlcNAc...) asparagine glycan. The region spanning 676-964 (SLVGCISATT…AGSMTSDLAK (289 aa)) is the ABC transmembrane type-1 2 domain. Transmembrane regions (helical) follow at residues 686-706 (FGAI…AFFA) and 716-736 (IHIY…LNLL). The N-linked (GlcNAc...) asparagine glycan is linked to Asn-773. 2 helical membrane-spanning segments follow: residues 797–815 (ISLL…IIGL) and 821–838 (LALV…CFYT). A glycan (N-linked (GlcNAc...) asparagine) is linked at Asn-855. The next 2 membrane-spanning stretches (helical) occupy residues 899-919 (AWLA…TWAL) and 933-953 (ISAG…KVIA). An ABC transporter 2 domain is found at 998 to 1236 (IELKNIDFSY…GGQFSRLAHA (239 aa)). 1033-1040 (GTSGCGKS) contributes to the ATP binding site. N-linked (GlcNAc...) asparagine glycosylation occurs at Asn-1187.

This sequence belongs to the ABC transporter superfamily. ABCB family. Multidrug resistance exporter (TC 3.A.1.201) subfamily.

It localises to the membrane. The sequence is that of Putative ABC transporter B family member 8 (ABCB8) from Arabidopsis thaliana (Mouse-ear cress).